We begin with the raw amino-acid sequence, 199 residues long: Pyridoxine/pyridoxamine 5'-phosphate oxidase (199 aa).

FMN is bound by residues 44-49, 59-60, Lys66, and Gln91; these read RTVLLK and YS. Lys49 contacts substrate. Positions 109, 113, and 117 each coordinate substrate. Residues 126-127 and Trp171 contribute to the FMN site; that span reads QS. 177–179 is a binding site for substrate; the sequence is RLH. Residue Arg181 participates in FMN binding.

The protein belongs to the pyridoxamine 5'-phosphate oxidase family. In terms of assembly, homodimer. FMN serves as cofactor.

It catalyses the reaction pyridoxamine 5'-phosphate + O2 + H2O = pyridoxal 5'-phosphate + H2O2 + NH4(+). It carries out the reaction pyridoxine 5'-phosphate + O2 = pyridoxal 5'-phosphate + H2O2. It participates in cofactor metabolism; pyridoxal 5'-phosphate salvage; pyridoxal 5'-phosphate from pyridoxamine 5'-phosphate: step 1/1. It functions in the pathway cofactor metabolism; pyridoxal 5'-phosphate salvage; pyridoxal 5'-phosphate from pyridoxine 5'-phosphate: step 1/1. Its function is as follows. Catalyzes the oxidation of either pyridoxine 5'-phosphate (PNP) or pyridoxamine 5'-phosphate (PMP) into pyridoxal 5'-phosphate (PLP). This Xanthomonas oryzae pv. oryzae (strain KACC10331 / KXO85) protein is Pyridoxine/pyridoxamine 5'-phosphate oxidase.